The following is a 222-amino-acid chain: Sugar fermentation stimulation protein homolog (222 aa).

The protein belongs to the SfsA family.

This chain is Sugar fermentation stimulation protein homolog, found in Thermotoga neapolitana (strain ATCC 49049 / DSM 4359 / NBRC 107923 / NS-E).